Here is a 122-residue protein sequence, read N- to C-terminus: Glycine cleavage system H protein (122 aa).

The Lipoyl-binding domain maps to Met-19–Thr-101. N6-lipoyllysine is present on Lys-60.

It belongs to the GcvH family. The glycine cleavage system is composed of four proteins: P, T, L and H. It depends on (R)-lipoate as a cofactor.

In terms of biological role, the glycine cleavage system catalyzes the degradation of glycine. The H protein shuttles the methylamine group of glycine from the P protein to the T protein. This chain is Glycine cleavage system H protein, found in Bartonella tribocorum (strain CIP 105476 / IBS 506).